The sequence spans 618 residues: Protease 4 (618 aa).

Residues 1-24 (MRTLWRFIAGFFKWTWRLLNFVRE) are Cytoplasmic-facing. A helical membrane pass occupies residues 25–45 (MVLNLFFIFLVLVGVGIWMQV). The Periplasmic portion of the chain corresponds to 46 to 618 (SGGDSKETAS…AFCLTCANMR (573 aa)). The Proton donor/acceptor role is filled by lysine 209. The active-site Nucleophile is the serine 409.

It belongs to the peptidase S49 family. In terms of assembly, homotetramer.

The protein localises to the cell inner membrane. Inhibited by serine hydrolase inhibitor FP-biotin and by antipain. Its function is as follows. Digests cleaved signal peptides in vitro, its in vivo function is unknown. This activity is necessary to maintain proper secretion of mature proteins across the membrane. This Escherichia coli (strain K12) protein is Protease 4 (sppA).